The primary structure comprises 359 residues: MDLMSFKEKEISKKECLELFEDTENFFDVIKLADSLRKDIVGDTVTYVVNANINFTNICSGTCGFCAFKAEPDDSNAFFLNPNEVAKKALEAKKTGATEVCIQGGLLKEIDTHFQAEILKKVKEITESFGKIDVHAFSPMEVKSAAENAGLSVKEALKILKENGLNSMPGTAAEILNDKIRSEICPTKLKTSEWIDVVTNAHKTGIKTTCTMMYGHIEENKHLAEHLSILRKIQKETGGFTEFVPLTFLHENAPLYHLDRVKNGASGMLDLKTYAVSRIFFKDCIKNIQTSWVKLGTKLSQVSLNCGANDIGGTLMEESISKAAGGSYGTYMSEEKLKDMILAVGRTPKQRNTAYEIIE.

One can recognise a Radical SAM core domain in the interval 45–282 (VTYVVNANIN…TYAVSRIFFK (238 aa)). Residues C59, C63, and C66 each contribute to the [4Fe-4S] cluster site.

This sequence belongs to the radical SAM superfamily. CofH family. Consists of two subunits, CofG and CofH. [4Fe-4S] cluster is required as a cofactor.

The catalysed reaction is 5-amino-6-(D-ribitylamino)uracil + L-tyrosine + S-adenosyl-L-methionine = 5-amino-5-(4-hydroxybenzyl)-6-(D-ribitylimino)-5,6-dihydrouracil + 2-iminoacetate + 5'-deoxyadenosine + L-methionine + H(+). The protein operates within cofactor biosynthesis; coenzyme F0 biosynthesis. Catalyzes the radical-mediated synthesis of 5-amino-5-(4-hydroxybenzyl)-6-(D-ribitylimino)-5,6-dihydrouracil from 5-amino-6-(D-ribitylamino)uracil and L-tyrosine. The chain is 5-amino-6-(D-ribitylamino)uracil--L-tyrosine 4-hydroxyphenyl transferase from Methanococcus maripaludis (strain C6 / ATCC BAA-1332).